Here is a 316-residue protein sequence, read N- to C-terminus: MRLDRVWVIYRADSQPAQREARQCAKELKALGSEVTTAMSGARVNPFPGLLATQEQLPDLAVVLGGDGTVLGAARHLAVHDIPILSINVGGHLGFLTHDRRVLRGDEIWQRLLNDQYAMERRMMLQAMVDRRSAEERADAPTPLQQPDVEDDDEHHWALNDFYLRAYRDEISPTCTLELEIDGEVVDQIRGDGLILSTPTGSTGYALAAGGPILHPGIDAIVVAPICPMSLSSRTVVVPPRARLVIWPLGAGDHRIKLWKDGVGCTVLEPGECCVVQQARHHAQMVQLNQSPSYYRTVASKLHWAGSLTAAQPSHN.

Asp67 acts as the Proton acceptor in catalysis. 67 to 68 (DG) contacts NAD(+). Residues 132–151 (RSAEERADAPTPLQQPDVED) form a disordered region. Residues 160–161 (ND), Arg190, and Asp192 each bind NAD(+).

This sequence belongs to the NAD kinase family. It depends on a divalent metal cation as a cofactor.

Its subcellular location is the cytoplasm. The enzyme catalyses NAD(+) + ATP = ADP + NADP(+) + H(+). Its function is as follows. Involved in the regulation of the intracellular balance of NAD and NADP, and is a key enzyme in the biosynthesis of NADP. Catalyzes specifically the phosphorylation on 2'-hydroxyl of the adenosine moiety of NAD to yield NADP. This chain is NAD kinase 1, found in Parasynechococcus marenigrum (strain WH8102).